Reading from the N-terminus, the 249-residue chain is Probable transcriptional regulatory protein A1S_1496 (249 aa).

This sequence belongs to the TACO1 family.

It is found in the cytoplasm. The protein is Probable transcriptional regulatory protein A1S_1496 of Acinetobacter baumannii (strain ATCC 17978 / DSM 105126 / CIP 53.77 / LMG 1025 / NCDC KC755 / 5377).